The following is an 823-amino-acid chain: Lon protease (823 aa).

The Lon N-terminal domain maps to isoleucine 51–tyrosine 246. Glycine 397–threonine 404 is an ATP binding site. Positions asparagine 633–arginine 815 constitute a Lon proteolytic domain. Active-site residues include serine 721 and lysine 764.

Belongs to the peptidase S16 family. Homohexamer. Organized in a ring with a central cavity.

It is found in the cytoplasm. The catalysed reaction is Hydrolysis of proteins in presence of ATP.. Its function is as follows. ATP-dependent serine protease that mediates the selective degradation of mutant and abnormal proteins as well as certain short-lived regulatory proteins. Required for cellular homeostasis and for survival from DNA damage and developmental changes induced by stress. Degrades polypeptides processively to yield small peptide fragments that are 5 to 10 amino acids long. Binds to DNA in a double-stranded, site-specific manner. This Parabacteroides distasonis (strain ATCC 8503 / DSM 20701 / CIP 104284 / JCM 5825 / NCTC 11152) protein is Lon protease.